Here is a 791-residue protein sequence, read N- to C-terminus: MRSMAQHLVTKIVTRRGLLMSKGMCPRMGRLCAVSIFCAFSGIQDASCVSEPAPPQDLERNHPGVAARYLQEGRWQEALSQAEQGVASAPQIADFLFIAARASYALQQPRARALQWMARAVAKDMQWCVYDIEEVRLFYARLCVDTLQHARALELLATAEQVSADADWLRARARYGLGQVEHAQELIEKALERWALDARFAKLFFAQERSRRPSSRSKKIADSILSRLSVWQEQDPSLLVEAALFEPRTNMAFRYLQTYFTLRPLDAPGESSAQSSYEQSTRAGDSAPEQELYARAQSIVLGLQYGVLDEQRAMEMFCTLNSPLAVPAVDPTDDVSSFGVHASSVSSSTPLQRVVVLYADLLHEFSRLLASRPIRARFARFLAEFEGVLYTDENRDGIVSARVFFKAGRPSRAQFDTNQDGILEYEVYANDGAPTCVHTMHSTQKTELSRASVFPIPQNIAAHDHERAAERWIAPRVSLPADNGVEGETQARVPLTQQGYRVCYDRYPEVHQVGWEDKTYVLRPRALRWQPVRMQSLDLARDLEGVRSHDFFTMVLTNEPLPTEQQITVSSLYYEKPDSLFERARVRTYLDEGLPLFSETHVGSRFRARTHYVDGRATRRDSDRDDDGFFETREYYNAQGAVRALSVDVHKDRSFAYQEEYGAKGQKVQKWYGRGRVTISHTELPTGHARTEWLHPVTGRHVTVDFVQGVPKRLLVDGEVHALTKDPRNAALYWVRRIPRNGDEVGQRIVESFRAATSPVVSEYFRTGGSVVRAVRSGGVVFAEELEPGKE.

Residues 267-288 form a disordered region; the sequence is APGESSAQSSYEQSTRAGDSAP. Residues 271–283 are compositionally biased toward polar residues; it reads SSAQSSYEQSTRA.

This is an uncharacterized protein from Treponema pallidum (strain Nichols).